We begin with the raw amino-acid sequence, 343 residues long: Cyclin-Y-like protein 1 (343 aa).

The tract at residues methionine 1–isoleucine 48 is disordered. The segment covering alanine 17 to glutamate 28 has biased composition (basic and acidic residues). Positions glutamate 145–asparagine 267 constitute a Cyclin N-terminal domain.

Belongs to the cyclin family. Cyclin Y subfamily.

It is found in the cell membrane. Functionally, key regulator of Wnt signaling implicated in various biological processes, such as embryonic neurogenesis. In Xenopus tropicalis (Western clawed frog), this protein is Cyclin-Y-like protein 1 (ccnyl1).